The chain runs to 324 residues: NADH-ubiquinone oxidoreductase chain 1 (324 aa).

8 helical membrane-spanning segments follow: residues 9–29 (LINP…LTLL), 76–96 (LFLV…APMP), 106–126 (LGVL…LGSG), 146–166 (ISYE…WGGY), 177–197 (ALWL…STLA), 228–248 (LLFL…AILF), 259–279 (ELTT…FLWV), and 299–319 (FLPL…AFAG).

It belongs to the complex I subunit 1 family.

The protein resides in the mitochondrion inner membrane. The enzyme catalyses a ubiquinone + NADH + 5 H(+)(in) = a ubiquinol + NAD(+) + 4 H(+)(out). Its function is as follows. Core subunit of the mitochondrial membrane respiratory chain NADH dehydrogenase (Complex I) that is believed to belong to the minimal assembly required for catalysis. Complex I functions in the transfer of electrons from NADH to the respiratory chain. The immediate electron acceptor for the enzyme is believed to be ubiquinone. In Formosania lacustris (Oriental stream loach), this protein is NADH-ubiquinone oxidoreductase chain 1 (MT-ND1).